The chain runs to 350 residues: tRNA N6-adenosine threonylcarbamoyltransferase (350 aa).

Residues His109 and His113 each coordinate Fe cation. Residues 136-140 (TVSGG), Asp169, Gly182, Asp186, and Asn284 each bind substrate. Asp312 lines the Fe cation pocket.

It belongs to the KAE1 / TsaD family. It depends on Fe(2+) as a cofactor.

The protein resides in the cytoplasm. It catalyses the reaction L-threonylcarbamoyladenylate + adenosine(37) in tRNA = N(6)-L-threonylcarbamoyladenosine(37) in tRNA + AMP + H(+). Its function is as follows. Required for the formation of a threonylcarbamoyl group on adenosine at position 37 (t(6)A37) in tRNAs that read codons beginning with adenine. Is involved in the transfer of the threonylcarbamoyl moiety of threonylcarbamoyl-AMP (TC-AMP) to the N6 group of A37, together with TsaE and TsaB. TsaD likely plays a direct catalytic role in this reaction. This Chlorobium chlorochromatii (strain CaD3) protein is tRNA N6-adenosine threonylcarbamoyltransferase.